The following is a 147-amino-acid chain: MKLHDLRPAKDAKKKRKRVGRGTGSGRGFTSGRGSKGQNARSGGGVRPTFEGGQTPLFRKLPKKGFNNIFKKVYNEVNVYQLNKFNKGEEVTPEKLLEKGIIDKVARSGVKILGNGELDKALTVKAHAFTKSAREKIEAAGGKAEVI.

Residues 1-11 are compositionally biased toward basic and acidic residues; the sequence is MKLHDLRPAKD. The interval 1–57 is disordered; that stretch reads MKLHDLRPAKDAKKKRKRVGRGTGSGRGFTSGRGSKGQNARSGGGVRPTFEGGQTPL. Over residues 21–35 the composition is skewed to gly residues; sequence RGTGSGRGFTSGRGS.

This sequence belongs to the universal ribosomal protein uL15 family. As to quaternary structure, part of the 50S ribosomal subunit.

In terms of biological role, binds to the 23S rRNA. The protein is Large ribosomal subunit protein uL15 of Halothermothrix orenii (strain H 168 / OCM 544 / DSM 9562).